We begin with the raw amino-acid sequence, 92 residues long: Small ribosomal subunit protein uS19 (92 aa).

Belongs to the universal ribosomal protein uS19 family.

Protein S19 forms a complex with S13 that binds strongly to the 16S ribosomal RNA. This is Small ribosomal subunit protein uS19 from Cellvibrio japonicus (strain Ueda107) (Pseudomonas fluorescens subsp. cellulosa).